We begin with the raw amino-acid sequence, 499 residues long: Neuronal acetylcholine receptor subunit alpha-3 (499 aa).

An N-terminal signal peptide occupies residues 1–25 (MGVVLLPPPLSMLMLVLMLLPAASA). Topologically, residues 26 to 244 (SEAEHRLFQY…PLFYTINLII (219 aa)) are extracellular. N-linked (GlcNAc...) asparagine glycosylation is found at Asn-49 and Asn-166. 2 disulfides stabilise this stretch: Cys-153-Cys-167 and Cys-217-Cys-218. A helical transmembrane segment spans residues 245-260 (PCLLISFLTVLVFYLP). Residues 261-262 (SD) are Cytoplasmic-facing. Residues 263–279 (CGEKVTLCISVLLSLTV) traverse the membrane as a helical segment. Glu-265 is a Na(+) binding site. The Extracellular portion of the chain corresponds to 280–301 (FLLVITETIPSTSLVIPLIGEY). Residues 302–320 (LLFTMIFVTLSIVITVFVL) form a helical membrane-spanning segment. Residues 321-468 (NVHYRTPTTH…QDDWKYVAMV (148 aa)) lie on the Cytoplasmic side of the membrane. 2 positions are modified to phosphoserine: Ser-407 and Ser-410. A helical transmembrane segment spans residues 469–487 (IDRIFLWVFILVCILGTAG). At 488–499 (LFLQPLMARDDT) the chain is on the extracellular side.

Belongs to the ligand-gated ion channel (TC 1.A.9) family. Acetylcholine receptor (TC 1.A.9.1) subfamily. Alpha-3/CHRNA3 sub-subfamily. As to quaternary structure, neuronal AChR is composed of two different types of subunits: alpha and beta. CHRNA3/Alpha-3 subunit can be combined to CHRNB2/beta-2 or CHRNB4/beta-4 to give rise to functional receptors. Part of a complex composed of STUB1/CHIP, VCP/p97, CHRNA3, and UBXN2A that modulates the ubiquitination and endoplasmic reticulum-associated degradation (ERAD) of CHRNA3. Within the complex UBXN2A acts as a scaffold protein required for the interaction of CHRNA3 with VCP/p97, this interaction also inhibits CHRNA3 ubiquitination by STUB1/CHIP and subsequently ERAD. Interacts with UBXN2A (via SEP domain), the interaction is required for the interaction of CHRNA3 in the STUB1:VCP:UBXN2A complex. Interacts with RIC3; which is required for proper folding and assembly. Ubiquitinated; by STUB1/CHIP and thereafter degraded by the 26S proteosome complex. Expressed in neurons. Expressed in umbrella cells of urothelium (at protein level).

It is found in the synaptic cell membrane. Its subcellular location is the cell membrane. The protein localises to the endoplasmic reticulum. It localises to the golgi apparatus. It catalyses the reaction Ca(2+)(in) = Ca(2+)(out). It carries out the reaction K(+)(in) = K(+)(out). The enzyme catalyses Na(+)(in) = Na(+)(out). Activated by a myriad of ligands such as acetylcholine, cytisine, nicotine, choline and epibatidine. The heteropentamer CHRNA3:CHRNB2 activity is blocked by alpha-conotoxins ImI, ImII, PnIA, GID and MII. The heteropentamer CHRNA3:CHRNB4 activity is blocked by the alpha-conotoxin ImI and AuIB. Component of neuronal acetylcholine receptors (nAChRs) that function as pentameric, ligand-gated cation channels with high calcium permeability among other activities. nAChRs are excitatory neurotrasnmitter receptors formed by a collection of nAChR subunits known to mediate synaptic transmission in the nervous system and the neuromuscular junction. Each nAchR subunit confers differential attributes to channel properties, including activation, deactivation and desensitization kinetics, pH sensitivity, cation permeability, and binding to allosteric modulators. CHRNA3 forms heteropentameric neuronal acetylcholine receptors with CHRNB2 and CHRNB4. CHRNA3:CHRNB4 being predominant in neurons of the autonomic ganglia, it is known as ganglionic nicotinic receptor. CHRNA3:CHRNB4 also plays an important role in the habenulo-interpeduncular tract, modulating the mesolimbic dopamine system and affecting reward circuits and addiction. Hypothalamic CHRNA3:CHRNB4 nAChR activation by nicotine leads to activation of POMC neurons and a decrease in food intake. Also expressed in the urothelium where it modulates reflex bladder activity by increasing intracellular calcium through extracellular influx and basal ATP release. The polypeptide is Neuronal acetylcholine receptor subunit alpha-3 (Chrna3) (Rattus norvegicus (Rat)).